The following is a 219-amino-acid chain: uncharacterized protein (219 aa).

The N-terminal stretch at 1 to 15 (MYVLFLLSWVLVAGA) is a signal peptide. Asn-118 carries N-linked (GlcNAc...) asparagine glycosylation. Residues 138–174 (GEVGEDPGKRARKRRLGLPIGEPGEDVGKRMRQRQQG) are disordered.

In terms of tissue distribution, component of the acid-insoluble and acid-soluble organic matrix of calcified layers of the shell (at protein level).

It is found in the secreted. This is an uncharacterized protein from Lottia gigantea (Giant owl limpet).